A 157-amino-acid chain; its full sequence is Transcription elongation factor GreA (157 aa).

This sequence belongs to the GreA/GreB family.

In terms of biological role, necessary for efficient RNA polymerase transcription elongation past template-encoded arresting sites. The arresting sites in DNA have the property of trapping a certain fraction of elongating RNA polymerases that pass through, resulting in locked ternary complexes. Cleavage of the nascent transcript by cleavage factors such as GreA or GreB allows the resumption of elongation from the new 3'terminus. GreA releases sequences of 2 to 3 nucleotides. The sequence is that of Transcription elongation factor GreA from Brucella abortus (strain S19).